Consider the following 995-residue polypeptide: S1 RNA-binding domain-containing protein 1 (995 aa).

The interval S23–V81 is disordered. Glycyl lysine isopeptide (Lys-Gly) (interchain with G-Cter in SUMO2) cross-links involve residues K84 and K134. Residues C120 to C165 form a disordered region. The span at E146–T159 shows a compositional bias: low complexity. Residues K166, K167, and K183 each participate in a glycyl lysine isopeptide (Lys-Gly) (interchain with G-Cter in SUMO2) cross-link. K185 participates in a covalent cross-link: Glycyl lysine isopeptide (Lys-Gly) (interchain with G-Cter in SUMO1); alternate. K185 is covalently cross-linked (Glycyl lysine isopeptide (Lys-Gly) (interchain with G-Cter in SUMO2); alternate). Residues A258–E288 are a coiled coil. At S861 the chain carries Phosphoserine. In terms of domain architecture, S1 motif spans G919–I992. A Glycyl lysine isopeptide (Lys-Gly) (interchain with G-Cter in SUMO2) cross-link involves residue K955. S964 carries the post-translational modification Phosphoserine.

This is S1 RNA-binding domain-containing protein 1 (SRBD1) from Homo sapiens (Human).